The primary structure comprises 180 residues: Large ribosomal subunit protein uL5 (180 aa).

This sequence belongs to the universal ribosomal protein uL5 family. In terms of assembly, part of the 50S ribosomal subunit; part of the 5S rRNA/L5/L18/L25 subcomplex. Contacts the 5S rRNA and the P site tRNA. Forms a bridge to the 30S subunit in the 70S ribosome.

In terms of biological role, this is one of the proteins that bind and probably mediate the attachment of the 5S RNA into the large ribosomal subunit, where it forms part of the central protuberance. In the 70S ribosome it contacts protein S13 of the 30S subunit (bridge B1b), connecting the 2 subunits; this bridge is implicated in subunit movement. Contacts the P site tRNA; the 5S rRNA and some of its associated proteins might help stabilize positioning of ribosome-bound tRNAs. This chain is Large ribosomal subunit protein uL5, found in Xanthomonas axonopodis pv. citri (strain 306).